A 32-amino-acid chain; its full sequence is U3-theraphotoxin-Hhn1r (32 aa).

3 disulfides stabilise this stretch: cysteine 2/cysteine 15, cysteine 9/cysteine 20, and cysteine 14/cysteine 27.

The protein belongs to the neurotoxin 10 (Hwtx-1) family. 16 (Hntx-8) subfamily. Expressed by the venom gland.

It localises to the secreted. Functionally, ion channel inhibitor. This is U3-theraphotoxin-Hhn1r from Cyriopagopus hainanus (Chinese bird spider).